The following is a 358-amino-acid chain: Histidinol-phosphate aminotransferase (358 aa).

Lysine 217 carries the N6-(pyridoxal phosphate)lysine modification.

It belongs to the class-II pyridoxal-phosphate-dependent aminotransferase family. Histidinol-phosphate aminotransferase subfamily. In terms of assembly, homodimer. Pyridoxal 5'-phosphate is required as a cofactor.

It catalyses the reaction L-histidinol phosphate + 2-oxoglutarate = 3-(imidazol-4-yl)-2-oxopropyl phosphate + L-glutamate. It functions in the pathway amino-acid biosynthesis; L-histidine biosynthesis; L-histidine from 5-phospho-alpha-D-ribose 1-diphosphate: step 7/9. The sequence is that of Histidinol-phosphate aminotransferase from Ruminiclostridium cellulolyticum (strain ATCC 35319 / DSM 5812 / JCM 6584 / H10) (Clostridium cellulolyticum).